A 364-amino-acid polypeptide reads, in one-letter code: Carbamoyl phosphate synthase pyrimidine-specific small chain (364 aa).

The tract at residues 1–169 (MKRYLVLEDG…AYPNPATGPN (169 aa)) is CPSase. L-glutamine-binding residues include serine 45, glycine 217, and glycine 219. The Glutamine amidotransferase type-1 domain maps to 169-356 (NVVVVDFGLK…IDLMAANQAT (188 aa)). The Nucleophile role is filled by cysteine 244. L-glutamine-binding residues include leucine 245, glutamine 248, asparagine 286, glycine 288, and tyrosine 289. Active-site residues include histidine 329 and aspartate 331.

Belongs to the CarA family. In terms of assembly, composed of two chains; the small (or glutamine) chain promotes the hydrolysis of glutamine to ammonia, which is used by the large (or ammonia) chain to synthesize carbamoyl phosphate. Tetramer of heterodimers (alpha,beta)4.

It carries out the reaction hydrogencarbonate + L-glutamine + 2 ATP + H2O = carbamoyl phosphate + L-glutamate + 2 ADP + phosphate + 2 H(+). The enzyme catalyses L-glutamine + H2O = L-glutamate + NH4(+). The protein operates within pyrimidine metabolism; UMP biosynthesis via de novo pathway; (S)-dihydroorotate from bicarbonate: step 1/3. With respect to regulation, inhibited by pyrimidine. In terms of biological role, small subunit of the glutamine-dependent carbamoyl phosphate synthetase (CPSase). CPSase catalyzes the formation of carbamoyl phosphate from the ammonia moiety of glutamine, carbonate, and phosphate donated by ATP, constituting the first step of the biosynthetic pathway leading to pyrimidine nucleotides. The small subunit (glutamine amidotransferase) binds and cleaves glutamine to supply the large subunit with the substrate ammonia. The protein is Carbamoyl phosphate synthase pyrimidine-specific small chain of Lactiplantibacillus plantarum (strain ATCC BAA-793 / NCIMB 8826 / WCFS1) (Lactobacillus plantarum).